Here is a 142-residue protein sequence, read N- to C-terminus: Pro-opiomelanocortin (142 aa).

A propeptide spanning residues 1-8 is cleaved from the precursor; that stretch reads SEPGRREG. Val-23 carries the valine amide modification. The residue at position 41 (Ser-41) is a Phosphoserine.

It belongs to the POMC family. Post-translationally, specific enzymatic cleavages at paired basic residues yield the different active peptides. As to expression, ACTH and MSH are produced by the pituitary gland.

The protein resides in the secreted. In terms of biological role, stimulates the adrenal glands to release cortisol. Functionally, anorexigenic peptide. Increases the pigmentation of skin by increasing melanin production in melanocytes. Its function is as follows. Increases the pigmentation of skin by increasing melanin production in melanocytes. Endogenous orexigenic opiate. In terms of biological role, endogenous opiate. This is Pro-opiomelanocortin (POMC) from Neovison vison (American mink).